Consider the following 281-residue polypeptide: Elongation factor 1-delta (281 aa).

N-acetylalanine is present on alanine 2. N6-acetyllysine is present on lysine 17. Serine 37, glutamate 40, serine 44, and serine 60 each carry phosphoserine. Residue threonine 73 is modified to Phosphothreonine. Positions 80–115 are leucine-zipper; it reads LVVRIASLEVENQSLRGVVQELQQAISKLEARLNVL. Phosphoserine occurs at positions 86, 91, 94, and 106. Position 107 is an N6-acetyllysine (lysine 107). Position 117 is an N6-acetyllysine; alternate (lysine 117). Position 117 is an N6-succinyllysine; alternate (lysine 117). A disordered region spans residues 118–172; sequence SSPGHRATAPQTQHVSPMRQVEPPAKKPATPAEDDEDDDIDLFGSDNEEEDKEAA. A Phosphoserine modification is found at serine 119. Threonine 129 bears the Phosphothreonine mark. Position 133 is a phosphoserine (serine 133). Threonine 147 is modified (phosphothreonine). Positions 149–169 are enriched in acidic residues; the sequence is AEDDEDDDIDLFGSDNEEEDK. At serine 162 the chain carries Phosphoserine; by CK2. The segment at 173–281 is catalytic (GEF); it reads QLREERLRQY…SVDIAAFNKI (109 aa).

It belongs to the EF-1-beta/EF-1-delta family. As to quaternary structure, EF-1 is composed of 4 subunits: alpha, beta, delta isoform 1, and gamma. Isoform 2 interacts with HSF1 and NFE2L2. As to expression, isoform 2 is specifically expressed in brain, cerebellum and testis.

The protein resides in the nucleus. In terms of biological role, EF-1-beta and EF-1-delta stimulate the exchange of GDP bound to EF-1-alpha to GTP, regenerating EF-1-alpha for another round of transfer of aminoacyl-tRNAs to the ribosome. Regulates induction of heat-shock-responsive genes through association with heat shock transcription factors and direct DNA-binding at heat shock promoter elements (HSE). The polypeptide is Elongation factor 1-delta (EEF1D) (Homo sapiens (Human)).